A 149-amino-acid polypeptide reads, in one-letter code: Putative inactive group IIC secretory phospholipase A2 (149 aa).

Positions 1–18 (MKVIAILTLLLFCSPTHS) are cleaved as a signal peptide. Intrachain disulfides connect Cys44–Cys142, Cys77–Cys107, Cys95–Cys112, and Cys97–Cys105. Ca(2+)-binding residues include Tyr45, Gly47, and Gly49.

Belongs to the phospholipase A2 family. Requires Ca(2+) as cofactor.

It is found in the secreted. Inactive phospholipase. This chain is Putative inactive group IIC secretory phospholipase A2 (PLA2G2C), found in Homo sapiens (Human).